A 343-amino-acid chain; its full sequence is Putative MO25-like protein At4g17270 (343 aa).

It belongs to the Mo25 family.

This chain is Putative MO25-like protein At4g17270, found in Arabidopsis thaliana (Mouse-ear cress).